The primary structure comprises 240 residues: DISARM protein DrmC (240 aa).

The PLD phosphodiesterase domain occupies 174-201; that stretch reads GYSSLHAKVIMVDEEKAFVSSANLSYNG. Active-site residues include histidine 179, lysine 181, and aspartate 186.

Belongs to the phospholipase D family.

It localises to the cytoplasm. Component of antiviral defense system DISARM (defense island system associated with restriction-modification), composed of DrmE, DrmA, DrmB, DrmC and DrmMII. DISARM is probably a multi-gene restriction module, this subunit is probably a phospholipase or nuclease. Expression of DISARM in B.subtilis (strain BEST7003) confers resistance to phages Nf, phi29, phi105, phi3T, SPO1, SPR and SPP1. Protection is over 10(7)-fold against phi3T, 10(4)-10(5)-fold against Nf, phi29, phi105 and SPR, 100-fold against SPO1 and 10-fold against SPP1. DISARM does not interfere with phage adsorption, but instead interferes with (phi3T) DNA replication early in its cycle, preventing replication, circularization and lysogeny and probably causes phage DNA degradation (DNA is degraded in SPP1-infected cells). The sequence is that of DISARM protein DrmC from Bacillus paralicheniformis (strain ATCC 9945a / NCIMB 11709 / CD-2).